Reading from the N-terminus, the 377-residue chain is Tubulin--tyrosine ligase (377 aa).

The TTL domain occupies 3–370 (TFVVRDENSS…PPDTEQVPQQ (368 aa)).

Belongs to the tubulin--tyrosine ligase family. Monomer. It depends on Mg(2+) as a cofactor. K(+) serves as cofactor.

The enzyme catalyses C-terminal L-alpha-aminoacyl-L-glutamyl-L-glutamyl-[tubulin] + L-tyrosine + ATP = C-terminal L-alpha-aminoacyl-L-glutamyl-L-glutamyl-L-tyrosyl-[tubulin] + ADP + phosphate + H(+). Functionally, catalyzes the post-translational addition of a tyrosine to the C-terminal end of detyrosinated alpha-tubulin. This is Tubulin--tyrosine ligase (Ttl) from Mus musculus (Mouse).